Here is a 314-residue protein sequence, read N- to C-terminus: Olfactory receptor 1E1 (314 aa).

Residues M1–N25 are Extracellular-facing. The N-linked (GlcNAc...) asparagine glycan is linked to N5. Residues L26–I49 traverse the membrane as a helical segment. Over R50–T57 the chain is Cytoplasmic. Residues P58–P79 traverse the membrane as a helical segment. The Extracellular portion of the chain corresponds to K80–Q100. A disulfide bridge links C97 with C189. The chain crosses the membrane as a helical span at residues M101–Y120. Residues D121–M139 lie on the Cytoplasmic side of the membrane. A helical membrane pass occupies residues L140 to L158. The Extracellular segment spans residues H159–N195. Residues E196–A219 form a helical membrane-spanning segment. At R220–K236 the chain is on the cytoplasmic side. The helical transmembrane segment at A237–Y259 threads the bilayer. The Extracellular portion of the chain corresponds to L260–T272. Residues V273 to L292 traverse the membrane as a helical segment. At R293–L314 the chain is on the cytoplasmic side.

The protein belongs to the G-protein coupled receptor 1 family.

It is found in the cell membrane. Odorant receptor. The sequence is that of Olfactory receptor 1E1 (OR1E1) from Gorilla gorilla gorilla (Western lowland gorilla).